A 248-amino-acid chain; its full sequence is MYQWNLPYRKDDVETGVSSRRPLLYPAMHENPELRWGFIRKVYSIIAFQLLATVAVAATVVTVRPIALFFATTGLGLALYIVIIITPLIVLCPLYYYHQKHPVNYLLLGIFTLALAFVVGLTCAFTNGKVILESVILTSVVVLSLTLYTFWAARKGYDFNFLGPFLFGALTVLIFFALIQILFPLGRVSVMIYGCLVSIIFCGYIVYDTDNLIKRHTYDEYIWAAVSLYLDIINLFLYLLTVLRALQR.

The next 7 helical transmembrane spans lie at 42–62 (VYSI…TVVT), 74–94 (GLGL…LCPL), 105–125 (YLLL…TCAF), 130–150 (VILE…LYTF), 165–185 (FLFG…LFPL), 188–208 (VSVM…IVYD), and 222–242 (IWAA…LLTV).

The protein belongs to the BI1 family.

Its subcellular location is the membrane. The sequence is that of Protein LIFEGUARD 3 from Arabidopsis thaliana (Mouse-ear cress).